A 226-amino-acid polypeptide reads, in one-letter code: Ribose-5-phosphate isomerase A (226 aa).

Substrate is bound by residues 33–36 (TGST), 86–89 (DGAD), and 99–102 (KGGG). E108 serves as the catalytic Proton acceptor. A substrate-binding site is contributed by K126.

The protein belongs to the ribose 5-phosphate isomerase family. In terms of assembly, homodimer.

The catalysed reaction is aldehydo-D-ribose 5-phosphate = D-ribulose 5-phosphate. The protein operates within carbohydrate degradation; pentose phosphate pathway; D-ribose 5-phosphate from D-ribulose 5-phosphate (non-oxidative stage): step 1/1. Its function is as follows. Catalyzes the reversible conversion of ribose-5-phosphate to ribulose 5-phosphate. In Bordetella bronchiseptica (strain ATCC BAA-588 / NCTC 13252 / RB50) (Alcaligenes bronchisepticus), this protein is Ribose-5-phosphate isomerase A.